The following is a 309-amino-acid chain: L-aminoadipate-semialdehyde dehydrogenase-phosphopantetheinyl transferase (309 aa).

Residues Arg-47, Arg-86–Lys-91, and Asn-108–His-111 contribute to the CoA site. Residues Asp-129 and Glu-181 each coordinate Mg(2+). Glu-181–Lys-185 lines the CoA pocket. At Ser-258 the chain carries Phosphoserine.

This sequence belongs to the P-Pant transferase superfamily. AcpS family. Monomer. Mg(2+) is required as a cofactor.

It is found in the cytoplasm. Its subcellular location is the cytosol. The catalysed reaction is apo-[ACP] + CoA = holo-[ACP] + adenosine 3',5'-bisphosphate + H(+). The enzyme catalyses apo-[ACP] + acetyl-CoA = acetyl-[ACP] + adenosine 3',5'-bisphosphate + H(+). In terms of biological role, catalyzes the post-translational modification of target proteins by phosphopantetheine. Can transfer the 4'-phosphopantetheine moiety from coenzyme A, regardless of whether the CoA is presented in the free thiol form or as an acetyl thioester, to a serine residue of a broad range of acceptors including the acyl carrier domain of FASN. The sequence is that of L-aminoadipate-semialdehyde dehydrogenase-phosphopantetheinyl transferase (AASDHPPT) from Pongo abelii (Sumatran orangutan).